The following is a 328-amino-acid chain: Ribosomal RNA small subunit methyltransferase H (328 aa).

S-adenosyl-L-methionine-binding positions include Gly37 to His39, Asp57, Phe83, Asp104, and Gln111.

Belongs to the methyltransferase superfamily. RsmH family.

The protein resides in the cytoplasm. It carries out the reaction cytidine(1402) in 16S rRNA + S-adenosyl-L-methionine = N(4)-methylcytidine(1402) in 16S rRNA + S-adenosyl-L-homocysteine + H(+). Specifically methylates the N4 position of cytidine in position 1402 (C1402) of 16S rRNA. This chain is Ribosomal RNA small subunit methyltransferase H, found in Neisseria meningitidis serogroup B (strain ATCC BAA-335 / MC58).